Consider the following 608-residue polypeptide: Mitochondrial import receptor subunit TOM70 (608 aa).

The residue at position 2 (alanine 2) is an N-acetylalanine. Over 2–38 (AASKPVEAAVVAAAVPSSGSGVGGGGTAGPGTGGLPR) the chain is Mitochondrial intermembrane. A helical membrane pass occupies residues 39-59 (WQLALAVGAPLLLGAGAIYLW). The Cytoplasmic portion of the chain corresponds to 60 to 608 (SRQQRRREAR…KKYGLKPPTL (549 aa)). Residues 67 to 107 (EARGRGDASGLKRNSERKTPEGRASPAPGSGHPEGPGAHLD) form a disordered region. An Omega-N-methylarginine modification is found at arginine 71. 3 positions are modified to phosphoserine: serine 91, serine 96, and serine 110. TPR repeat units lie at residues 114-147 (AQAA…CPTE) and 153-186 (STFY…NPKY). Residue lysine 185 is modified to N6-acetyllysine. A Glycyl lysine isopeptide (Lys-Gly) (interchain with G-Cter in SUMO2) cross-link involves residue lysine 275. TPR repeat units follow at residues 294–327 (ENSG…EGKY), 329–362 (AEAL…KEAN), 367–400 (ANAL…DPQN), 401–434 (ADVY…RPES), 440–475 (QKCF…FPRC), 476–509 (AEGY…EPDN), 511–544 (TTYV…DNKC), and 545–578 (DFAY…AKSE). Residue serine 434 is modified to Phosphoserine.

The protein belongs to the Tom70 family. In terms of assembly, forms part of the preprotein translocase complex of the outer mitochondrial membrane (TOM complex) which consists of at least 7 different proteins (TOMM5, TOMM6, TOMM7, TOMM20, TOMM22, TOMM40 and TOMM70). Interacts with CAPN8. Interacts with TRADD, TRAF6 and STING. Interacts with MAVS; the interaction is enhanced by Sendai virus infection. Interacts with HSPA8 and HSP90AA1; both interactions are required for preprotein mitochondrial import. The interaction with HSP90AA1 is direct and mediates the association of TOMM70 with IRF3 and TBK1. Upon mitochondrial depolarization, interacts with PINK1; the interaction is required for PINK1-TOM-TIM23 supercomplex formation which is critical for PINK1 stabilization at the outer mitochondrial membrane, kinase activation and downstream mitophagy. As to quaternary structure, (Microbial infection) Interacts (via C-terminus) with SARS coronaviru/SARS-CoV and SARS coronavirus-2/SARS-CoV-2 virus protein ORF9b. (Microbial infection) Interacts with parasite T.gondii RH strain MAF1b1; the interaction impairs TOMM70 import activity, enables the parasite to associate with the host mitochondria and facilitates the association of MAF1b1 with MIB complex component SAMM50, promoting the formation of SPOTs (structures positive for outer mitochondrial membrane (OMM)); the interaction is probably indirect.

The protein resides in the mitochondrion outer membrane. Acts as a receptor of the preprotein translocase complex of the outer mitochondrial membrane (TOM complex). Recognizes and mediates the translocation of mitochondrial preproteins from the cytosol into the mitochondria in a chaperone dependent manner. Mediates TBK1 and IRF3 activation induced by MAVS in response to Sendai virus infection and promotes host antiviral responses during virus infection. Upon Sendai virus infection, recruits HSP90AA1:IRF3:BAX in mitochondrion and the complex induces apoptosis. This is Mitochondrial import receptor subunit TOM70 from Homo sapiens (Human).